A 479-amino-acid chain; its full sequence is Splicing factor ESS-2 homolog (479 aa).

Methionine 1 bears the N-acetylmethionine mark. 2 disordered regions span residues 1–38 (MGTP…RSRQ) and 95–152 (GKIS…PSLD). Threonine 3 is subject to Phosphothreonine. Over residues 7–19 (SAGALFLSSASAP) the composition is skewed to low complexity. Residues 135 to 145 (DDGEAGEEEEK) are compositionally biased toward acidic residues. Lysine 145 is covalently cross-linked (Glycyl lysine isopeptide (Lys-Gly) (interchain with G-Cter in SUMO2)). Position 295 is a phosphoserine (serine 295). Phosphothreonine is present on threonine 389. A phosphoserine mark is found at serine 394 and serine 398. The tract at residues 415–479 (RALRASYTPS…PARRKASDFF (65 aa)) is disordered. Over residues 433–454 (TPAGGPQTPTSTPAPGSATRTP) the composition is skewed to low complexity. Residues 455 to 466 (LTQDPASITDNL) are compositionally biased toward polar residues.

This sequence belongs to the ESS2 family. In terms of assembly, identified in the spliceosome C complex. Interacts with FRA10AC1. In the adult, widely expressed with highest expression in the testis and brain. Also widely expressed in the embryo with highest levels in the anterior pons.

The protein resides in the nucleus. Its function is as follows. May be involved in pre-mRNA splicing. The chain is Splicing factor ESS-2 homolog (Ess2) from Mus musculus (Mouse).